The sequence spans 209 residues: Bacteriorhodopsin (209 aa).

The helical transmembrane segment at 1-17 (LWLGTAGMFLGMLYFIA) threads the bilayer. At 18–31 (RGWGETDGRRQKFY) the chain is on the cytoplasmic side. The helical transmembrane segment at 32–50 (IATILITAIAFVNYLAMAL) threads the bilayer. Topologically, residues 51–66 (GFGLTFIEFGGEQHPI) are extracellular. A helical membrane pass occupies residues 67 to 84 (YWARYTDWLFTTPLLLYD). The Cytoplasmic portion of the chain corresponds to 85–95 (LGLLAGADRNT). A helical membrane pass occupies residues 96–115 (IYSLVSLDVLMIGTGVVATL). The Extracellular portion of the chain corresponds to 116–128 (SAGSGVLSAGAER). The helical transmembrane segment at 129 to 148 (LVWWGISTAFLLVLLYFLFS) threads the bilayer. The Cytoplasmic portion of the chain corresponds to 149-166 (SLSGRVANLPSDTRSTFK). A helical transmembrane segment spans residues 167–185 (TLRNLVTVVWLVYPVWWLV). At 186–197 (GSEGLGLVGIGI) the chain is on the extracellular side. Residues 198–209 (ETAGFMVIDLVA) form a helical membrane-spanning segment.

This sequence belongs to the archaeal/bacterial/fungal opsin family.

The protein resides in the cell membrane. Functionally, light-driven proton pump. The protein is Bacteriorhodopsin (bop) of Halobacterium halobium (strain shark).